A 551-amino-acid chain; its full sequence is Probable glucomannan 4-beta-mannosyltransferase 3 (551 aa).

The helical transmembrane segment at 60 to 80 (ACLALSAMLLADAVLMAAACF) threads the bilayer. Asp-154 is an active-site residue. The substrate site is built by Asp-213 and Asp-215. Asp-307 is an active-site residue. A run of 4 helical transmembrane segments spans residues 386 to 406 (VVAHVVPFMLYCVVIPFSVLI), 409 to 429 (VTVPVWGVVYVPTTITLLHAI), 504 to 524 (ILFSIFLFFCATYNLAYGGDY), and 525 to 545 (YFVYIYLQAIAFLVVGIGFCG).

It belongs to the glycosyltransferase 2 family. Plant cellulose synthase-like A subfamily.

It is found in the golgi apparatus membrane. It catalyses the reaction GDP-mannose + (glucomannan)n = GDP + (glucomannan)n+1.. Functionally, probable mannan synthase which consists of a 4-beta-mannosyltransferase activity on mannan using GDP-mannose. The beta-1,4-mannan product is the backbone for galactomannan synthesis by galactomannan galactosyltransferase. Galactomannan is a noncellulosic polysaccharides of plant cell wall. In Oryza sativa subsp. japonica (Rice), this protein is Probable glucomannan 4-beta-mannosyltransferase 3.